Here is a 208-residue protein sequence, read N- to C-terminus: DNA-binding protein HupB (208 aa).

Residues 1–90 form a bacterial histone-like domain region; it reads MNKAELIDVL…PGAQFKAVIS (90 aa). At Lys-3 the chain carries N6-acetyllysine. Lys-3 carries the N6-acetyllysine; alternate; partial modification. At Lys-3 the chain carries N6-methyllysine; alternate; partial. Residue Lys-72 is modified to N6-acetyllysine; partial. At Lys-86 the chain carries N6-methyllysine; partial. Positions 92–208 are C-terminus, required for nucleoid localization; sequence AQKLPADGPA…KKAPAKKGRR (117 aa). An N6-acetyllysine; alternate; partial mark is found at Lys-94 and Lys-103. N6-methyllysine; alternate; partial is present on residues Lys-94 and Lys-103. A disordered region spans residues 96–208; that stretch reads PADGPAVKRG…KKAPAKKGRR (113 aa). The interval 101–205 is degenerate repeats region; the sequence is AVKRGVTAGP…AAAKKAPAKK (105 aa). A compositionally biased stretch (basic residues) spans 113 to 208; the sequence is KAAKKAPAKK…KKAPAKKGRR (96 aa). 4 positions are modified to N6-acetyllysine: Lys-116, Lys-136, Lys-149, and Lys-168.

This sequence belongs to the bacterial histone-like protein family. Long actinobacterial subfamily. May form oligomers. Interacts with RNase E (rne). In addition to the identifed modifications, is also methylated on one of Arg-53; Arg-54 or Arg-55.

It localises to the cytoplasm. The protein localises to the nucleoid. Its subcellular location is the secreted. The protein resides in the cell wall. It carries out the reaction 4 Fe(2+) + O2 + 4 H(+) = 4 Fe(3+) + 2 H2O. Its activity is regulated as follows. Trans-stilbene derivative 4,4'-[(E)-ethene-1,2 diylbis({5[(phenylcarbonyl)amino]benzene-2,1-diyl}sulfonylimino)] dibenzoic acid (SD1) inhibits DNA binding at 50 uM. SD1 does not inhibit growth in a range of 3-1600 uM. A nucleoid-associated protein (NAP) that plays a crucial role in local chromosome architecture. Helps organize newly replicated oriC proximal regions and contributes to the timing of replication initiation and coordinating replication with chromosome segregation. There are between 30,000-60,000 molecules in a log phase cell; the protein-DNA complex is dynamic during the cell cycle, with more complexes near the cell ends. Binds irregularly along the chromosome with higher binding near the origin of replication (oriC) and lowest binding near the chromosome terminus (ter). Binds DNA non-sequence specifically via both its N- and C-terminal domains with high affinity, has no preference for linear or supercoiled DNA. Binds four-way junction DNA. Represses T7 RNA polymerase in vitro. The C-terminal domain enhances DNA end-joining in vitro in the presence of T4 DNA ligase. RNase E and HupB jointly contribute to cellular adaptation to changing growth conditions and survival during antibiotic treatment. Functionally, has ferroxidase activity, converts Fe(2+) into Fe(3+). Binds Fe(3+) but not Fe(2+); prevents the generation of hydroxyl radicals by the Fenton reaction and thus protects DNA from damage. May function in iron storage. Its function is as follows. Plays a role in epigenetic resistance to antibiotics. Growth on levels of isoniazid (INH) near the minimal inhibitory concentration (MIC) kills most bacteria. The surviving cells grow as either large or small colony variants (SCV), evidence suggest SCVs are associated with persistent infections. Mutating this protein leads to specific loss of SCVs. In terms of biological role, may play a role in cell wall assembly. The sequence is that of DNA-binding protein HupB from Mycolicibacterium smegmatis (strain ATCC 700084 / mc(2)155) (Mycobacterium smegmatis).